We begin with the raw amino-acid sequence, 115 residues long: Meromycolate extension acyl carrier protein (115 aa).

A Carrier domain is found at valine 3–glutamate 81. Serine 41 carries the post-translational modification O-(pantetheine 4'-phosphoryl)serine.

Belongs to the acyl carrier protein (ACP) family. Post-translationally, 4'-phosphopantetheine is transferred from CoA to a specific serine of apo-AcpM.

The protein localises to the cytoplasm. Its function is as follows. Acyl carrier protein involved in meromycolate extension. This is Meromycolate extension acyl carrier protein (acpM) from Mycobacterium leprae (strain TN).